The sequence spans 450 residues: Bifunctional apoptosis regulator (450 aa).

The tract at residues 1-20 is disordered; sequence MEEPQKSYVNTMDLERDEPL. Residues 1–140 lie on the Cytoplasmic side of the membrane; the sequence is MEEPQKSYVN…PNTGRANQQM (140 aa). The RING-type zinc-finger motif lies at 34–74; it reads CHCCYDILVNPTTLNCGHSFCRHCLALWWASSKKTECPECR. Residues 141 to 161 form a helical membrane-spanning segment; that stretch reads GGGFFSGVLTALTGVAVVLLV. Topologically, residues 162 to 331 are lumenal; the sequence is YHWSSRESEH…KEPTWKQWRE (170 aa). Positions 182–249 constitute an SAM domain; the sequence is WTAEEVVLWL…LMELERVKAL (68 aa). A glycan (N-linked (GlcNAc...) asparagine) is linked at N232. The helical transmembrane segment at 332–352 threads the bilayer; sequence FLVKYSFLPYQLIAEFAWDWL. The Cytoplasmic segment spans residues 353 to 360; it reads EVHYWTSR. The chain crosses the membrane as a helical span at residues 361-381; that stretch reads FLIINAMLLSVLELFSFWRIW. Residues 382 to 404 are Lumenal-facing; the sequence is SRSELKTVPQRMWSHFWKVSTQG. A helical membrane pass occupies residues 405 to 425; the sequence is LFVAMFWPLIPQFVCNCLFYW. Topologically, residues 426–450 are cytoplasmic; the sequence is ALYFNPIINIDLVVKELRRLETQVL.

As to quaternary structure, interacts with CASP8, BCL2 and BCL2L1 through SAM domain and also with HIP1, IFT57, ESRRBL1 and BCAP31. Interacts with NGFR; this interaction inhibits NF-kappa-B and JNK-related signaling pathways. Mediates RING-dependent self-ubiquitination leading to proteasomal degradation. In terms of tissue distribution, expressed highly in brain, moderately in small intestine, weakly in testes and only faintly in liver and skeletal muscle. Not expressed in heart, kidney, lung and spleen.

It localises to the endoplasmic reticulum membrane. It carries out the reaction S-ubiquitinyl-[E2 ubiquitin-conjugating enzyme]-L-cysteine + [acceptor protein]-L-lysine = [E2 ubiquitin-conjugating enzyme]-L-cysteine + N(6)-ubiquitinyl-[acceptor protein]-L-lysine.. Functionally, membrane-bound E3 ubiquitin ligase that plays a role in several processes including apoptosis regulation or reticulum endoplasmic stress. Has anti-apoptotic activity, both for apoptosis triggered via death-receptors and via mitochondrial factors. Contributes to the dynamic control of IRE1/ERN1 signaling during ER stress by inducing BAX inhibitor 1/TMBIM6 proteasomal degradation. Promotes the activation of TGF-beta signaling by mediating the 'Lys-63'-linked ubiquitination of TGFBR1 which is critical to activate the pathway. Together with NGFR, negatively regulates NF-kappa-B and JNK-related signaling pathways. Promotes the proteasome-mediated degradation of PNPLA3, a protein involveld in lipid metabolism. The protein is Bifunctional apoptosis regulator (BFAR) of Homo sapiens (Human).